We begin with the raw amino-acid sequence, 301 residues long: Glycine--tRNA ligase alpha subunit (301 aa).

It belongs to the class-II aminoacyl-tRNA synthetase family. In terms of assembly, tetramer of two alpha and two beta subunits.

The protein resides in the cytoplasm. It catalyses the reaction tRNA(Gly) + glycine + ATP = glycyl-tRNA(Gly) + AMP + diphosphate. The chain is Glycine--tRNA ligase alpha subunit from Shewanella piezotolerans (strain WP3 / JCM 13877).